A 174-amino-acid chain; its full sequence is Shikimate kinase (174 aa).

Residue 10 to 15 (GSGKTA) coordinates ATP. Residue threonine 14 participates in Mg(2+) binding. Substrate-binding residues include aspartate 32, arginine 56, and glycine 78. Arginine 118 is an ATP binding site. Arginine 137 lines the substrate pocket. Arginine 154 provides a ligand contact to ATP.

The protein belongs to the shikimate kinase family. In terms of assembly, monomer. Mg(2+) is required as a cofactor.

It is found in the cytoplasm. It catalyses the reaction shikimate + ATP = 3-phosphoshikimate + ADP + H(+). It functions in the pathway metabolic intermediate biosynthesis; chorismate biosynthesis; chorismate from D-erythrose 4-phosphate and phosphoenolpyruvate: step 5/7. Its function is as follows. Catalyzes the specific phosphorylation of the 3-hydroxyl group of shikimic acid using ATP as a cosubstrate. The polypeptide is Shikimate kinase (Symbiobacterium thermophilum (strain DSM 24528 / JCM 14929 / IAM 14863 / T)).